Consider the following 92-residue polypeptide: Small ribosomal subunit protein uS19c (92 aa).

Belongs to the universal ribosomal protein uS19 family.

It is found in the plastid. Its subcellular location is the chloroplast. Functionally, protein S19 forms a complex with S13 that binds strongly to the 16S ribosomal RNA. The polypeptide is Small ribosomal subunit protein uS19c (Pinus koraiensis (Korean pine)).